Consider the following 565-residue polypeptide: NAD-dependent malic enzyme (565 aa).

The active-site Proton donor is the tyrosine 104. An NAD(+)-binding site is contributed by arginine 157. Catalysis depends on lysine 175, which acts as the Proton acceptor. Positions 246, 247, and 270 each coordinate a divalent metal cation. NAD(+) contacts are provided by aspartate 270 and asparagine 418.

This sequence belongs to the malic enzymes family. As to quaternary structure, homotetramer. Requires Mg(2+) as cofactor. Mn(2+) is required as a cofactor.

The enzyme catalyses (S)-malate + NAD(+) = pyruvate + CO2 + NADH. It carries out the reaction oxaloacetate + H(+) = pyruvate + CO2. This Enterobacter sp. (strain 638) protein is NAD-dependent malic enzyme.